We begin with the raw amino-acid sequence, 282 residues long: 4-hydroxy-3-methylbut-2-enyl diphosphate reductase (282 aa).

Position 12 (cysteine 12) interacts with [4Fe-4S] cluster. 2 residues coordinate (2E)-4-hydroxy-3-methylbut-2-enyl diphosphate: histidine 40 and histidine 72. 2 residues coordinate dimethylallyl diphosphate: histidine 40 and histidine 72. The isopentenyl diphosphate site is built by histidine 40 and histidine 72. Cysteine 94 serves as a coordination point for [4Fe-4S] cluster. Residue histidine 122 coordinates (2E)-4-hydroxy-3-methylbut-2-enyl diphosphate. Histidine 122 serves as a coordination point for dimethylallyl diphosphate. Histidine 122 is an isopentenyl diphosphate binding site. The active-site Proton donor is the glutamate 124. (2E)-4-hydroxy-3-methylbut-2-enyl diphosphate is bound at residue threonine 160. Cysteine 188 is a binding site for [4Fe-4S] cluster. Residues serine 216, asparagine 218, and serine 260 each coordinate (2E)-4-hydroxy-3-methylbut-2-enyl diphosphate. The dimethylallyl diphosphate site is built by serine 216, asparagine 218, and serine 260. The isopentenyl diphosphate site is built by serine 216, asparagine 218, and serine 260.

This sequence belongs to the IspH family. Requires [4Fe-4S] cluster as cofactor.

It catalyses the reaction isopentenyl diphosphate + 2 oxidized [2Fe-2S]-[ferredoxin] + H2O = (2E)-4-hydroxy-3-methylbut-2-enyl diphosphate + 2 reduced [2Fe-2S]-[ferredoxin] + 2 H(+). The catalysed reaction is dimethylallyl diphosphate + 2 oxidized [2Fe-2S]-[ferredoxin] + H2O = (2E)-4-hydroxy-3-methylbut-2-enyl diphosphate + 2 reduced [2Fe-2S]-[ferredoxin] + 2 H(+). It participates in isoprenoid biosynthesis; dimethylallyl diphosphate biosynthesis; dimethylallyl diphosphate from (2E)-4-hydroxy-3-methylbutenyl diphosphate: step 1/1. It functions in the pathway isoprenoid biosynthesis; isopentenyl diphosphate biosynthesis via DXP pathway; isopentenyl diphosphate from 1-deoxy-D-xylulose 5-phosphate: step 6/6. In terms of biological role, catalyzes the conversion of 1-hydroxy-2-methyl-2-(E)-butenyl 4-diphosphate (HMBPP) into a mixture of isopentenyl diphosphate (IPP) and dimethylallyl diphosphate (DMAPP). Acts in the terminal step of the DOXP/MEP pathway for isoprenoid precursor biosynthesis. This Geotalea uraniireducens (strain Rf4) (Geobacter uraniireducens) protein is 4-hydroxy-3-methylbut-2-enyl diphosphate reductase.